Here is a 96-residue protein sequence, read N- to C-terminus: Large ribosomal subunit protein bL28 (96 aa).

Over residues 1 to 22 the composition is skewed to polar residues; sequence MSRSCELTGKGVQSGNNVSHAN. The disordered stretch occupies residues 1–24; that stretch reads MSRSCELTGKGVQSGNNVSHANNK.

Belongs to the bacterial ribosomal protein bL28 family.

The sequence is that of Large ribosomal subunit protein bL28 from Rhizobium meliloti (strain 1021) (Ensifer meliloti).